We begin with the raw amino-acid sequence, 243 residues long: Voltage-gated monoatomic cation channel TMEM109 (243 aa).

The N-terminal stretch at 1-33 (MAGAHSTPLWSRHLLKAVLMVLVALFLVHSASA) is a signal peptide. The Lumenal portion of the chain corresponds to 34 to 83 (QSHREFASPGQQKKETSADILTQIGRSLKEMLDTWLGPETMHVISETLLQ). A helical membrane pass occupies residues 84–104 (VMWAISSAISVACFALSGIAA). Residues 105-135 (QLLSALGLDGEQLTQGLKLSPSQVQTLLLWG) are Cytoplasmic-facing. Residues 136-156 (AAALVIYWLLSLLLGLVLALL) traverse the membrane as a helical segment. Topologically, residues 157-185 (GRILGGLKLVLFVAGFVALVRSVPDPSTR) are lumenal. The helical transmembrane segment at 186–205 (ALMLLALLTLFALLSRLTGS) threads the bilayer. Residues 206 to 243 (RSSGSHLEAKVRGLERQIEELRGRQRRAAKMPRSMEEE) lie on the Cytoplasmic side of the membrane.

As to quaternary structure, homooligomer. Interacts with CRYAB; in the cellular response to DNA damage.

It is found in the nucleus outer membrane. The protein resides in the endoplasmic reticulum membrane. The protein localises to the sarcoplasmic reticulum membrane. It catalyses the reaction K(+)(in) = K(+)(out). The enzyme catalyses Ca(2+)(in) = Ca(2+)(out). Functions as a voltage-gated monoatomic cation channel permeable to both potassium and calcium. Plays a role in the cellular response to DNA damage. The protein is Voltage-gated monoatomic cation channel TMEM109 of Mus musculus (Mouse).